Reading from the N-terminus, the 615-residue chain is Gluconate 2-dehydrogenase flavoprotein (615 aa).

Positions 1 to 22 (MERGERVSVPVSGYSRGEGVTV) are cleaved as a signal peptide. Catalysis depends on histidine 542, which acts as the Proton acceptor.

Belongs to the GMC oxidoreductase family. In terms of assembly, heterotrimer. Requires FAD as cofactor.

It localises to the cell membrane. It catalyses the reaction D-gluconate + A = 2-dehydro-D-gluconate + AH2. Its function is as follows. Part of the heterotrimer that catalyzes the conversion of D-gluconate to 2-dehydro-D-gluconate. This subunit functions as the dehydrogenase. This Pantoea cypripedii (Pectobacterium cypripedii) protein is Gluconate 2-dehydrogenase flavoprotein.